Consider the following 345-residue polypeptide: Holliday junction branch migration complex subunit RuvB (345 aa).

A large ATPase domain (RuvB-L) region spans residues 4–185 (LDNRFVTPLS…FGVLCPMEFY (182 aa)). Residues L24, R25, G66, K69, T70, T71, 132-134 (EDY), R175, Y185, and R222 each bind ATP. T70 lines the Mg(2+) pocket. Positions 186 to 256 (NEEELKDIIV…MTNKALNLLE (71 aa)) are small ATPAse domain (RuvB-S). The head domain (RuvB-H) stretch occupies residues 259–345 (KEGFDSIDTK…ENINQYKFKI (87 aa)). Positions 314 and 319 each coordinate DNA.

This sequence belongs to the RuvB family. Homohexamer. Forms an RuvA(8)-RuvB(12)-Holliday junction (HJ) complex. HJ DNA is sandwiched between 2 RuvA tetramers; dsDNA enters through RuvA and exits via RuvB. An RuvB hexamer assembles on each DNA strand where it exits the tetramer. Each RuvB hexamer is contacted by two RuvA subunits (via domain III) on 2 adjacent RuvB subunits; this complex drives branch migration. In the full resolvosome a probable DNA-RuvA(4)-RuvB(12)-RuvC(2) complex forms which resolves the HJ.

It is found in the cytoplasm. It carries out the reaction ATP + H2O = ADP + phosphate + H(+). Its function is as follows. The RuvA-RuvB-RuvC complex processes Holliday junction (HJ) DNA during genetic recombination and DNA repair, while the RuvA-RuvB complex plays an important role in the rescue of blocked DNA replication forks via replication fork reversal (RFR). RuvA specifically binds to HJ cruciform DNA, conferring on it an open structure. The RuvB hexamer acts as an ATP-dependent pump, pulling dsDNA into and through the RuvAB complex. RuvB forms 2 homohexamers on either side of HJ DNA bound by 1 or 2 RuvA tetramers; 4 subunits per hexamer contact DNA at a time. Coordinated motions by a converter formed by DNA-disengaged RuvB subunits stimulates ATP hydrolysis and nucleotide exchange. Immobilization of the converter enables RuvB to convert the ATP-contained energy into a lever motion, pulling 2 nucleotides of DNA out of the RuvA tetramer per ATP hydrolyzed, thus driving DNA branch migration. The RuvB motors rotate together with the DNA substrate, which together with the progressing nucleotide cycle form the mechanistic basis for DNA recombination by continuous HJ branch migration. Branch migration allows RuvC to scan DNA until it finds its consensus sequence, where it cleaves and resolves cruciform DNA. The polypeptide is Holliday junction branch migration complex subunit RuvB (Clostridium tetani (strain Massachusetts / E88)).